A 121-amino-acid polypeptide reads, in one-letter code: uncharacterized protein (121 aa).

Residues 100-121 form a disordered region; the sequence is KSFSNTKDGKKNDDDNNSSSKS.

This is an uncharacterized protein from Mycoplasma pneumoniae (strain ATCC 29342 / M129 / Subtype 1) (Mycoplasmoides pneumoniae).